Reading from the N-terminus, the 144-residue chain is Large ribosomal subunit protein uL11 (144 aa).

It belongs to the universal ribosomal protein uL11 family. In terms of assembly, part of the ribosomal stalk of the 50S ribosomal subunit. Interacts with L10 and the large rRNA to form the base of the stalk. L10 forms an elongated spine to which L12 dimers bind in a sequential fashion forming a multimeric L10(L12)X complex. In terms of processing, one or more lysine residues are methylated.

Forms part of the ribosomal stalk which helps the ribosome interact with GTP-bound translation factors. In Francisella tularensis subsp. mediasiatica (strain FSC147), this protein is Large ribosomal subunit protein uL11.